The chain runs to 138 residues: Ribosomal RNA large subunit methyltransferase H (138 aa).

Residues Leu-57, Gly-86, and 105–110 contribute to the S-adenosyl-L-methionine site; that span reads LSPLTF.

This sequence belongs to the RNA methyltransferase RlmH family. Homodimer.

It localises to the cytoplasm. The enzyme catalyses pseudouridine(1915) in 23S rRNA + S-adenosyl-L-methionine = N(3)-methylpseudouridine(1915) in 23S rRNA + S-adenosyl-L-homocysteine + H(+). Its function is as follows. Specifically methylates the pseudouridine at position 1915 (m3Psi1915) in 23S rRNA. This Prochlorococcus marinus (strain MIT 9312) protein is Ribosomal RNA large subunit methyltransferase H.